Here is a 729-residue protein sequence, read N- to C-terminus: Monosaccharide-sensing protein 2 (729 aa).

The next 6 membrane-spanning stretches (helical) occupy residues 1-21 (MSGAVLVAIAAAVGNLLQGWD), 47-67 (LIVAMSLIGATLITTCSGGVA), 81-101 (ILYFVGSLVMLWSPNVYVLLL), 104-124 (LLDGFGVGLVVTLVPIYISET), 139-159 (FTGSGGMFLSYCMVFGMSLMP), and 165-185 (LMLGVLFIPSLVFFFLTVFFL). The segment covering 347–363 (VGEGEDYPSDHGDDSED) has biased composition (acidic residues). Disordered stretches follow at residues 347-367 (VGEGEDYPSDHGDDSEDDLHS) and 423-442 (EREDESGQKEEGFPGSRRGS). Residues 423–434 (EREDESGQKEEG) are compositionally biased toward basic and acidic residues. Phosphoserine occurs at positions 438 and 448. Helical transmembrane passes span 507–527 (ALVVGVGLQILQQFSGINGVL), 553–573 (ASLLISALTTFVMLPAIAVAM), 585–605 (LLTTIPILIASLLVLVISNLV), 610–630 (IVHAVLSTVSVVLYFCFFVMG), 650–670 (ICIAICALTFWICDIIVTYSL), and 679–699 (LAGVFGMYAIVCCISWVFVFI).

Belongs to the major facilitator superfamily. Sugar transporter (TC 2.A.1.1) family. Mostly expressed in roots and stems, and, to a lower extent, in juvenile and adult leaves, and in flower tissues.

It localises to the vacuole membrane. The catalysed reaction is D-glucose(out) + H(+)(in) = D-glucose(in) + H(+)(out). It carries out the reaction sucrose(out) + H(+)(in) = sucrose(in) + H(+)(out). Sugar proton-coupled antiporter which contributes to vacuolar sugar import (e.g. monosaccharides including glucose, sucrose and fructose), particularly during stress responses (e.g. in response to cold). In Arabidopsis thaliana (Mouse-ear cress), this protein is Monosaccharide-sensing protein 2.